Consider the following 205-residue polypeptide: Putative 3-methyladenine DNA glycosylase (205 aa).

The protein belongs to the DNA glycosylase MPG family.

The protein is Putative 3-methyladenine DNA glycosylase of Staphylococcus epidermidis (strain ATCC 35984 / DSM 28319 / BCRC 17069 / CCUG 31568 / BM 3577 / RP62A).